We begin with the raw amino-acid sequence, 2045 residues long: MVVEERKQTIVFGDLTCDSVAGLRTLVTVKDNPLLISFFERVTTGLREEIGLLPFSQRQRFIRFTTFEELLARVQRSTCPHPALEKALACTYQLACFIRQYTSPGHKYPSTQQTCLVGLCTGLLSAAAVGCCQSITDLLPLATHTVLIAFRAGLFVADVRDRLEPQTGAPLAWSVLIPGLDGDTASLTLQKYNEEKGLPATSAPYISTYANTGVTLSGLPSALNDLLDSSCLPKNRALTIPIYAPYHASHLYGQKDIESILRKASATEFASYQCQFSILSSITGQSIQVDTFGALIDYALNAILREPLRLDRIVSSLGEALLSDSPIRGCTIFPIATVIGQSLAAALRKHGAPDITVDPCMNSSIAVRDDRTSTTGHLGHSKLAIIGYSGRFPDANNNEELWQLLHEGRDVASITPSNRWDVKTHVDPTLKKKNTMGTPYGCWLKEPGLFDAKFFALSPREAPQVDPAQRLALMTAYEAMEFAGLVPDSTPSSQSDRIGVFYGTTSNDWGETNSSQNVDTYYIPGSCRAFIPGRQNFFYKFSGPSYSVDTACSSGLAALHLACNSLLKGDIDTAICGGTNVLTNPDITAGLDRGHFLSRTGNCKTFDDDADGYCRGEGVCTMVIKRLEDAKADNDPIIAVILGAYTNHSAEAESITRPHIGAQKAIFEKVLTSAGVDPYSVGYVEMHGTGTQAGDAREMKSVLSVFAPETERPRTDAERLFLGSAKANVGHGESVSGPIALIKSLMMLERNEIPPHCGIKTKINSGFPTDLMDRNVHIAKQPIPWERPEGGVRRIMINNFSAAGGNSSVLIEDAPVFEPKSKEAEPRSTHVVAVSAKSSTALIANIKSLLSYMNATKPELPSLSYTTTARRTHHPFRVMVSGPDLPEIHALLENKLASPTVQNRARAAQRAAFAFTGQGSQYIGMGESLLNFSTFRSDIERFNGIAETLGFPSFLPLLESGNGDISELPPLVVQVGTVCTQIAMARLWRSWGIEPCAVVGHSLGEYAALNIAGVLSEADTIFLAGKRAQLLQEDISANTHAMLAIGTSVEETRSLCDGLEYDIACINTPKETVLSGTNKQIDRILDILSSTSLKKTRLRVPFAFHSSQMEPVLEKFKAAARGVKFYEPKVPVISPLFGEVLTSKEPFGPEYLARHCRETVNFATALESAKADGVISSALWVEIGAHPIVSGLLRNNLDSTLKTVPTLQRNKDTWKVLTSSLSTLYESGVDIRWSEYHRDFIPGLSVLRLPSYNWDLKEYWMQYVNDWSLYKGDAQFLKGTPGLSTTCVHKLVEEKKDGNKITVVGEVDVLRDDVDPFVRGHRVNNLPLVTPSVYAEMALVIGEYLRKQQTKLSGTLVDLQHMDVQRPFATKSKGKGPQLLQCHVVLDCETFQGSVEFWSVTPEGKKLVRHALASITFPDAKAAQEEVQQRAQGIMKEMDDMAARLNTDDRVQKFTGKTGYNLVSSLASYDPEYMGVSSVLLDSGRLEAVATVKFNNPRTDGVYHVNPYLIDNLGQPALFVMNANDQADLSKEVFVNHGWKSLHFYKPLSIQKTYRSHVRMSGPDADGLYGGDMVVFEDKEVVAVYKGIKAQGVPRRLMDYIVHMRDDTKAGAPAGGTLNASQSAAANPAADPSAQADSDNWQAALKIISEESGVPIAELSPEAAFDDLGVDSLLALLCASRFREELGLHYESSIFLDHPTIKELEAFWKQGAPETGAVTVSGRDAVLNSMFTEAEAEVDQDKNSSDEDRSSLGTSSYEVISPNTTETTPEITKTSSPKISATSLLLQGNPALPSTVKTLFLLPDGSGSCSSYAGLPRIHPSIAVVGVNCPFMKTPESYTCGIDEVTQMYITEIRRRQPHGPYALGGWSVGGIFSYHIAQQLAAQGEQVSELILIDCPVPKGLDHLPRRYYEYCDTIGLLGDVNGVKRDPPPWLISHFEACVNSLHTYHATPFRPNNAPRTQIIWACDAIDKHCEPKFDRRPDDPEGLKFLTSTRTDFGPCGWETLLPEEDMTLDRMTGANHFSMMKGEFAKRLSEMIEGFLMIGN.

The tract at residues 10–247 (IVFGDLTCDS…LTIPIYAPYH (238 aa)) is N-terminal acylcarrier protein transacylase domain (SAT). In terms of domain architecture, Ketosynthase family 3 (KS3) spans 380-813 (HSKLAIIGYS…GGNSSVLIED (434 aa)). Catalysis depends on for beta-ketoacyl synthase activity residues Cys552, His687, and His731. The segment at 913–1213 (FAFTGQGSQY…VPTLQRNKDT (301 aa)) is malonyl-CoA:ACP transacylase (MAT) domain. The N-terminal hotdog fold stretch occupies residues 1289–1422 (HKLVEEKKDG…ASITFPDAKA (134 aa)). Residues 1289 to 1599 (HKLVEEKKDG…AQGVPRRLMD (311 aa)) form the PKS/mFAS DH domain. His1321 acts as the Proton acceptor; for dehydratase activity in catalysis. The tract at residues 1442–1599 (AARLNTDDRV…AQGVPRRLMD (158 aa)) is C-terminal hotdog fold. The Proton donor; for dehydratase activity role is filled by Asp1511. Residues 1612–1636 (APAGGTLNASQSAAANPAADPSAQA) form a disordered region. The segment covering 1619 to 1636 (NASQSAAANPAADPSAQA) has biased composition (low complexity). Residues 1635 to 1712 (QADSDNWQAA…ELEAFWKQGA (78 aa)) form the Carrier domain. Residues 1640–1709 (NWQAALKIIS…TIKELEAFWK (70 aa)) are product template (PT) domain. The residue at position 1672 (Ser1672) is an O-(pantetheine 4'-phosphoryl)serine. The disordered stretch occupies residues 1735 to 1776 (EAEVDQDKNSSDEDRSSLGTSSYEVISPNTTETTPEITKTSS). Over residues 1739-1750 (DQDKNSSDEDRS) the composition is skewed to basic and acidic residues. Positions 1760–1776 (ISPNTTETTPEITKTSS) are enriched in low complexity. Positions 1798 to 2039 (TLFLLPDGSG…AKRLSEMIEG (242 aa)) are thioesterase.

Pantetheine 4'-phosphate serves as cofactor.

It participates in secondary metabolite biosynthesis. Its function is as follows. Non-reducing polyketide synthase (NRPKS); part of the gene cluster 27 that mediates the biosynthesis of asparasone A, a sclerotium-specific anthraquinone pigment important for sclerotial survival. Catalyzes the formation of the aromatic polyketide from acetyl coenzyme A and seven malonyl coenzyme A molecules. Through its product template (PT) domain, catalyzes the cyclization of polyketide backbone via C6-C11 aldolcondensation. The protein is Non-reducing polyketide synthase pks27 of Aspergillus flavus (strain ATCC 200026 / FGSC A1120 / IAM 13836 / NRRL 3357 / JCM 12722 / SRRC 167).